The sequence spans 92 residues: UPF0223 protein Sez_0908 (92 aa).

Belongs to the UPF0223 family.

This chain is UPF0223 protein Sez_0908, found in Streptococcus equi subsp. zooepidemicus (strain MGCS10565).